The following is a 296-amino-acid chain: Phosphoribosylaminoimidazole-succinocarboxamide synthase (296 aa).

This sequence belongs to the SAICAR synthetase family.

It carries out the reaction 5-amino-1-(5-phospho-D-ribosyl)imidazole-4-carboxylate + L-aspartate + ATP = (2S)-2-[5-amino-1-(5-phospho-beta-D-ribosyl)imidazole-4-carboxamido]succinate + ADP + phosphate + 2 H(+). Its pathway is purine metabolism; IMP biosynthesis via de novo pathway; 5-amino-1-(5-phospho-D-ribosyl)imidazole-4-carboxamide from 5-amino-1-(5-phospho-D-ribosyl)imidazole-4-carboxylate: step 1/2. This is Phosphoribosylaminoimidazole-succinocarboxamide synthase from Geotalea uraniireducens (strain Rf4) (Geobacter uraniireducens).